The chain runs to 514 residues: MARLALLSVSNKTGIIDLARSLVEEFDFDLISSGGTAQALKDAGLPVTKVADYTGSPEILGGRVKTLHPRIHGGILARRDVPQDITDLENNQIRPIDLVVVNLYPFEETIAKPGVTLLEAVEQIDIGGPAMLRASSKNFAHLAVLCDPAQYDEYLEELRQNNGVASLEFRQKAALKGFSHTASYDQAIAQALTCQFASYLADTQQYTLSGTQLQSLRYGENPHQPATWYQTGTTPTGWAAATKLQGKELSYNNLVDLEAARRIIAEFTDTPAATIIKHTNPCGTALGSSISEAYKKAFNADSTSAFGGIVALNRPIDAATASELTKTFLECVVAPSCEAEAQEILAKKSNVRVLTLADLSSGPKDTVKAIAGGFLVQTADDIVADTSQWQVVTERQPTDSELAELLFAWKVCKHVKSNAIVVTSDRTTLGVGAGQMNRVGSVKIALEQAGEKAKGAILASDGFFPFDDSVRTAAAAGITAIVQPGGSLRDKDSIKAANDLGLLMVLTGVRHFLH.

The 146-residue stretch at methionine 1–cysteine 146 folds into the MGS-like domain.

It belongs to the PurH family.

It catalyses the reaction (6R)-10-formyltetrahydrofolate + 5-amino-1-(5-phospho-beta-D-ribosyl)imidazole-4-carboxamide = 5-formamido-1-(5-phospho-D-ribosyl)imidazole-4-carboxamide + (6S)-5,6,7,8-tetrahydrofolate. It carries out the reaction IMP + H2O = 5-formamido-1-(5-phospho-D-ribosyl)imidazole-4-carboxamide. It participates in purine metabolism; IMP biosynthesis via de novo pathway; 5-formamido-1-(5-phospho-D-ribosyl)imidazole-4-carboxamide from 5-amino-1-(5-phospho-D-ribosyl)imidazole-4-carboxamide (10-formyl THF route): step 1/1. Its pathway is purine metabolism; IMP biosynthesis via de novo pathway; IMP from 5-formamido-1-(5-phospho-D-ribosyl)imidazole-4-carboxamide: step 1/1. The polypeptide is Bifunctional purine biosynthesis protein PurH (Nostoc punctiforme (strain ATCC 29133 / PCC 73102)).